The primary structure comprises 148 residues: uncharacterized protein (148 aa).

This is an uncharacterized protein from Bos taurus (Bovine).